Here is a 185-residue protein sequence, read N- to C-terminus: Large ribosomal subunit protein eL19 (185 aa).

A disordered region spans residues 152-185 (SDKLTSQQEARRAKNTASRAKRNEKAQIVAKVDV).

It belongs to the eukaryotic ribosomal protein eL19 family.

This chain is Large ribosomal subunit protein eL19 (RPL19), found in Tetrahymena thermophila (strain SB210).